Here is a 563-residue protein sequence, read N- to C-terminus: Eukaryotic translation initiation factor 3 subunit D-1 (563 aa).

The interval 98-167 is disordered; sequence VQKPPHQRGR…GPPPKMRESS (70 aa). The span at 100–121 shows a compositional bias: basic residues; sequence KPPHQRGRFRNMRNSRSGRGRN. The residue at position 128 (Thr128) is a Phosphothreonine. The interval 291–305 is RNA gate; sequence EFDLLTVNETSVEPP.

This sequence belongs to the eIF-3 subunit D family. In terms of assembly, component of the eukaryotic translation initiation factor 3 (eIF-3) complex. The eIF-3 complex interacts with pix.

The protein localises to the cytoplasm. In terms of biological role, mRNA cap-binding component of the eukaryotic translation initiation factor 3 (eIF-3) complex, which is involved in protein synthesis of a specialized repertoire of mRNAs and, together with other initiation factors, stimulates binding of mRNA and methionyl-tRNAi to the 40S ribosome. The eIF-3 complex specifically targets and initiates translation of a subset of mRNAs involved in cell proliferation. In the eIF-3 complex, eif3d specifically recognizes and binds the 7-methylguanosine cap of a subset of mRNAs. In Drosophila virilis (Fruit fly), this protein is Eukaryotic translation initiation factor 3 subunit D-1.